Here is a 273-residue protein sequence, read N- to C-terminus: Putative phosphoenolpyruvate synthase regulatory protein (273 aa).

153 to 160 (AVSRAGKT) is a binding site for ADP.

It belongs to the pyruvate, phosphate/water dikinase regulatory protein family. PSRP subfamily.

It catalyses the reaction [pyruvate, water dikinase] + ADP = [pyruvate, water dikinase]-phosphate + AMP + H(+). The catalysed reaction is [pyruvate, water dikinase]-phosphate + phosphate + H(+) = [pyruvate, water dikinase] + diphosphate. In terms of biological role, bifunctional serine/threonine kinase and phosphorylase involved in the regulation of the phosphoenolpyruvate synthase (PEPS) by catalyzing its phosphorylation/dephosphorylation. This chain is Putative phosphoenolpyruvate synthase regulatory protein, found in Xanthomonas axonopodis pv. citri (strain 306).